The chain runs to 902 residues: AAA+ ATPase ClpV1 (902 aa).

The region spanning 10–151 (FGKLNSLAYK…KVEALTERFD (142 aa)) is the Clp R domain. Repeat regions lie at residues 13–78 (LNSL…LDRL) and 88–151 (LSSH…ERFD). 237-244 (GEAGVGKT) provides a ligand contact to ATP. Positions 441 to 559 (AEVDDSRRRI…AQLSALQGEE (119 aa)) form a coiled coil. 640 to 647 (GTSGVGKT) lines the ATP pocket.

It belongs to the ClpA/ClpB family. As to quaternary structure, interacts with TagJ.

Its subcellular location is the cytoplasm. Functionally, component of the H1 type VI (H1-T6SS) secretion system that plays a role in the release of toxins targeting both eukaryotic and prokaryotic species. Acts as an AAA(+) ATPase that disassembles the contracted sheath, which resets the systems for reassembly of an extended sheath that is ready to fire again. This is AAA+ ATPase ClpV1 (clpV1) from Pseudomonas aeruginosa (strain ATCC 15692 / DSM 22644 / CIP 104116 / JCM 14847 / LMG 12228 / 1C / PRS 101 / PAO1).